A 1658-amino-acid chain; its full sequence is Silent chromatin protein ESC1 (1658 aa).

The segment covering 36 to 54 (DSKMKDQHGYSRVHNDKYR) has biased composition (basic and acidic residues). 2 disordered regions span residues 36–76 (DSKM…SSHI) and 156–499 (TSFQ…LENE). Composition is skewed to acidic residues over residues 205–214 (LENDEYELSE) and 245–254 (SNDEYAEEEG). A compositionally biased stretch (polar residues) spans 262-286 (GQEQANVENATQISSSDSSEGQNYS). Residues 289-305 (VEMELEDDIDVESDAEK) show a composition bias toward acidic residues. Residues 335 to 352 (VIEKYESDEHKVHQRYSE) are compositionally biased toward basic and acidic residues. Residues 365–375 (VDDESEDEESQ) are compositionally biased toward acidic residues. Positions 386–397 (VYHHNEHELDDK) are enriched in basic and acidic residues. Acidic residues predominate over residues 398-407 (ELIEDIESSD). A compositionally biased stretch (low complexity) spans 408–417 (SESQSAQESE). Composition is skewed to basic and acidic residues over residues 425–435 (EYKMKNEKSTS), 442–461 (SESR…KVEQ), and 471–482 (DDIIRSSLDKNF). Residue Thr-500 is modified to Phosphothreonine. Residue Ser-532 is modified to Phosphoserine. Disordered regions lie at residues 550-584 (SRNS…DESE) and 589-608 (LKDF…GDLS). Over residues 568 to 577 (GHSNGSNLSG) the composition is skewed to polar residues. 4 positions are modified to phosphoserine: Ser-579, Ser-583, Ser-608, and Ser-662. Disordered regions lie at residues 770–819 (SKET…EDNT), 863–964 (EMSS…VKGT), and 1082–1115 (ENNT…GSAK). Positions 800 to 812 (QSKNFPGVANSTD) are enriched in polar residues. 2 positions are modified to phosphoserine: Ser-865 and Ser-866. A compositionally biased stretch (basic and acidic residues) spans 869-878 (ECVKQNDDGS). The segment covering 879–905 (KTQISFSTDSPDNFQESNDNTEFSSTK) has biased composition (polar residues). Phosphoserine occurs at positions 888 and 911. Positions 918 to 931 (SLKKELTKAEVVDK) are enriched in basic and acidic residues. Residues 932–956 (LDEEESEDSYEQDYADPEPGNDEGS) show a composition bias toward acidic residues. Residues Ser-937, Ser-1092, Ser-1096, Ser-1098, Ser-1166, Ser-1176, and Ser-1178 each carry the phosphoserine modification. The segment covering 1082-1096 (ENNTNMHDQVSQACS) has biased composition (polar residues). A compositionally biased stretch (basic and acidic residues) spans 1097 to 1115 (DSDRDQDSTAEKNVEGSAK). Polar residues predominate over residues 1197–1207 (STDASVNMKSV). The disordered stretch occupies residues 1197 to 1216 (STDASVNMKSVSSKERDSDE). Phosphoserine occurs at positions 1214 and 1254. Basic and acidic residues predominate over residues 1261–1272 (VKDKENLHKSEE). The disordered stretch occupies residues 1261–1315 (VKDKENLHKSEEPLVEGLQSEQHFEKKDHSENEEEFDTIYGDITSANIHSNAPDD). 3 positions are modified to phosphoserine: Ser-1290, Ser-1326, and Ser-1332. 2 disordered regions span residues 1334–1482 (RLIE…TSPE) and 1503–1658 (PATT…SVDK). Residues 1335–1366 (LIEDSRRGKNQEESDEVNTSRERDLTFEKSVN) show a composition bias toward basic and acidic residues. Ser-1403, Ser-1409, Ser-1450, and Ser-1454 each carry phosphoserine. A compositionally biased stretch (acidic residues) spans 1407-1423 (LNSEPEEAELYELEIEG). The span at 1463 to 1479 (YPYSNSENITAEKSAPT) shows a compositional bias: polar residues. The segment covering 1507 to 1537 (LEKHDKTNVTSVLDDRSEHLSSHDVDNEPHD) has biased composition (basic and acidic residues). The residue at position 1539 (Ser-1539) is a Phosphoserine. Composition is skewed to basic and acidic residues over residues 1550 to 1564 (PEHQ…VEVK) and 1575 to 1591 (VLEE…DKSS). Phosphoserine is present on residues Ser-1590 and Ser-1591. Residues 1607 to 1626 (TKAKKKSRKRNYNSRRRKRK) show a composition bias toward basic residues. A compositionally biased stretch (polar residues) spans 1648–1658 (RGQNTHPSVDK).

Interacts with SIR4.

It localises to the nucleus. Its function is as follows. Involved in the clustering of telomeres at the nuclear periphery, forming discrete subcompartments that accumulate a complex of histone-binding silencing factors like SIR4. Required for SIR4-mediated anchoring and partitioning of plasmids. This is Silent chromatin protein ESC1 (ESC1) from Saccharomyces cerevisiae (strain ATCC 204508 / S288c) (Baker's yeast).